Here is a 634-residue protein sequence, read N- to C-terminus: Threonine--tRNA ligase (634 aa).

In terms of domain architecture, TGS spans 1 to 61 (MINITLPDGS…DHDASLRIIT (61 aa)). The tract at residues 243–534 (DHRRIGKAQD…LIEHHAGAFP (292 aa)) is catalytic. Residues C334, H385, and H511 each coordinate Zn(2+).

The protein belongs to the class-II aminoacyl-tRNA synthetase family. In terms of assembly, homodimer. Requires Zn(2+) as cofactor.

The protein resides in the cytoplasm. The enzyme catalyses tRNA(Thr) + L-threonine + ATP = L-threonyl-tRNA(Thr) + AMP + diphosphate + H(+). In terms of biological role, catalyzes the attachment of threonine to tRNA(Thr) in a two-step reaction: L-threonine is first activated by ATP to form Thr-AMP and then transferred to the acceptor end of tRNA(Thr). Also edits incorrectly charged L-seryl-tRNA(Thr). The protein is Threonine--tRNA ligase of Xanthomonas euvesicatoria pv. vesicatoria (strain 85-10) (Xanthomonas campestris pv. vesicatoria).